Consider the following 241-residue polypeptide: MLTTLLPLLPLLLPGWALCSQEASDGPWDLHMTQVSYFRNPSQVWHRGNATLGGVLTHVLEGPGRNVSIQQLQPLQEPDSWALTKIYLNRYLEEFVGLVQVVHQERGVTFPLIIRCFLGCELPPEGSEARVFFEVAVNGSSFVNFQPKTASWVAEPHAPSRVVTYTVDQLNKYNRTRYELREFLQDTCVQYIQKHITTNNLKGSQTGRSYTSLVLGVLVGCFIVTGVAVGIFLCTGGRRRC.

The N-terminal stretch at 1-17 (MLTTLLPLLPLLLPGWA) is a signal peptide. Topologically, residues 18-212 (LCSQEASDGP…GSQTGRSYTS (195 aa)) are extracellular. Residues Asn-49, Asn-66, Asn-138, and Asn-174 are each glycosylated (N-linked (GlcNAc...) asparagine). Intrachain disulfides connect Cys-120–Cys-188 and Cys-221–Cys-234. The helical transmembrane segment at 213-233 (LVLGVLVGCFIVTGVAVGIFL) threads the bilayer. The Cytoplasmic segment spans residues 234–241 (CTGGRRRC).

As to expression, expressed in endothelial cells.

It is found in the membrane. Its function is as follows. Binds activated protein C. Enhances protein C activation by the thrombin-thrombomodulin complex; plays a role in the protein C pathway controlling blood coagulation. This Bos taurus (Bovine) protein is Endothelial protein C receptor (PROCR).